A 496-amino-acid polypeptide reads, in one-letter code: Glycerol kinase (496 aa).

ADP is bound at residue T11. ATP is bound by residues T11, T12, and S13. T11 serves as a coordination point for sn-glycerol 3-phosphate. An ADP-binding site is contributed by R15. Residues R81, E82, Y133, and D242 each contribute to the sn-glycerol 3-phosphate site. Residues R81, E82, Y133, D242, and Q243 each contribute to the glycerol site. Residues T264 and G307 each contribute to the ADP site. Positions 264, 307, 311, and 408 each coordinate ATP. ADP-binding residues include G408 and N412.

This sequence belongs to the FGGY kinase family.

It carries out the reaction glycerol + ATP = sn-glycerol 3-phosphate + ADP + H(+). The protein operates within polyol metabolism; glycerol degradation via glycerol kinase pathway; sn-glycerol 3-phosphate from glycerol: step 1/1. Inhibited by fructose 1,6-bisphosphate (FBP). Functionally, key enzyme in the regulation of glycerol uptake and metabolism. Catalyzes the phosphorylation of glycerol to yield sn-glycerol 3-phosphate. This chain is Glycerol kinase, found in Aromatoleum aromaticum (strain DSM 19018 / LMG 30748 / EbN1) (Azoarcus sp. (strain EbN1)).